Reading from the N-terminus, the 170-residue chain is Bifunctional protein PyrR (170 aa).

The short motif at Leu90–Thr102 is the PRPP-binding element.

The protein belongs to the purine/pyrimidine phosphoribosyltransferase family. PyrR subfamily.

The enzyme catalyses UMP + diphosphate = 5-phospho-alpha-D-ribose 1-diphosphate + uracil. Its function is as follows. Regulates the transcription of the pyrimidine nucleotide (pyr) operon in response to exogenous pyrimidines. Functionally, also displays a weak uracil phosphoribosyltransferase activity which is not physiologically significant. This is Bifunctional protein PyrR from Pseudomonas savastanoi pv. phaseolicola (strain 1448A / Race 6) (Pseudomonas syringae pv. phaseolicola (strain 1448A / Race 6)).